Consider the following 151-residue polypeptide: Prefoldin subunit alpha (151 aa).

It belongs to the prefoldin subunit alpha family. As to quaternary structure, heterohexamer of two alpha and four beta subunits.

It localises to the cytoplasm. Its function is as follows. Molecular chaperone capable of stabilizing a range of proteins. Seems to fulfill an ATP-independent, HSP70-like function in archaeal de novo protein folding. This is Prefoldin subunit alpha (pfdA) from Aeropyrum pernix (strain ATCC 700893 / DSM 11879 / JCM 9820 / NBRC 100138 / K1).